Here is a 716-residue protein sequence, read N- to C-terminus: Fatty acid oxidation complex subunit alpha (716 aa).

The segment at 1–189 is enoyl-CoA hydratase/isomerase; it reads MIYQSPTIQV…KVGAVDAVVA (189 aa). Asp-296 contacts substrate. Positions 311-716 are 3-hydroxyacyl-CoA dehydrogenase; sequence KAVNSAAVLG…AANNGSYYQA (406 aa). Residues Met-324, Asp-343, 400–402, Lys-407, and Ser-429 contribute to the NAD(+) site; that span reads VVE. Residue His-450 is the For 3-hydroxyacyl-CoA dehydrogenase activity of the active site. Residue Asn-453 participates in NAD(+) binding. Asn-500 and Tyr-660 together coordinate substrate.

The protein in the N-terminal section; belongs to the enoyl-CoA hydratase/isomerase family. In the C-terminal section; belongs to the 3-hydroxyacyl-CoA dehydrogenase family. As to quaternary structure, heterotetramer of two alpha chains (FadB) and two beta chains (FadA).

The catalysed reaction is a (3S)-3-hydroxyacyl-CoA + NAD(+) = a 3-oxoacyl-CoA + NADH + H(+). It carries out the reaction a (3S)-3-hydroxyacyl-CoA = a (2E)-enoyl-CoA + H2O. The enzyme catalyses a 4-saturated-(3S)-3-hydroxyacyl-CoA = a (3E)-enoyl-CoA + H2O. It catalyses the reaction (3S)-3-hydroxybutanoyl-CoA = (3R)-3-hydroxybutanoyl-CoA. The catalysed reaction is a (3Z)-enoyl-CoA = a 4-saturated (2E)-enoyl-CoA. It carries out the reaction a (3E)-enoyl-CoA = a 4-saturated (2E)-enoyl-CoA. The protein operates within lipid metabolism; fatty acid beta-oxidation. Functionally, involved in the aerobic and anaerobic degradation of long-chain fatty acids via beta-oxidation cycle. Catalyzes the formation of 3-oxoacyl-CoA from enoyl-CoA via L-3-hydroxyacyl-CoA. It can also use D-3-hydroxyacyl-CoA and cis-3-enoyl-CoA as substrate. The protein is Fatty acid oxidation complex subunit alpha of Shewanella oneidensis (strain ATCC 700550 / JCM 31522 / CIP 106686 / LMG 19005 / NCIMB 14063 / MR-1).